Reading from the N-terminus, the 171-residue chain is MTGIGEQSIAEQVRSLLEPVLERDGYELVEVEWARLAGRWTLRVFIDKAGGVGIDDCQAVSKTVEPILDVADVIEPAYDLEVSSPGLDRPLRKPRDFDRYAGQRVHVKAYGPVAGTAPGAPARKHWTGVLKGFRDGAVELDVDGVLHRVPHDQIAKANLEYDVEGDLRRKD.

This sequence belongs to the RimP family.

It is found in the cytoplasm. Required for maturation of 30S ribosomal subunits. The protein is Ribosome maturation factor RimP of Anaeromyxobacter sp. (strain K).